The following is a 288-amino-acid chain: Thymidylate synthase (288 aa).

A dUMP-binding site is contributed by arginine 21. Asparagine 51 contacts (6R)-5,10-methylene-5,6,7,8-tetrahydrofolate. 150-151 (RR) serves as a coordination point for dUMP. The active-site Nucleophile is cysteine 170. Residues 190–193 (RSGD), asparagine 201, and 231–233 (HIY) each bind dUMP. Residue aspartate 193 participates in (6R)-5,10-methylene-5,6,7,8-tetrahydrofolate binding. (6R)-5,10-methylene-5,6,7,8-tetrahydrofolate is bound at residue alanine 287.

The protein belongs to the thymidylate synthase family. Bacterial-type ThyA subfamily. In terms of assembly, homodimer.

Its subcellular location is the cytoplasm. It carries out the reaction dUMP + (6R)-5,10-methylene-5,6,7,8-tetrahydrofolate = 7,8-dihydrofolate + dTMP. It participates in pyrimidine metabolism; dTTP biosynthesis. Functionally, catalyzes the reductive methylation of 2'-deoxyuridine-5'-monophosphate (dUMP) to 2'-deoxythymidine-5'-monophosphate (dTMP) while utilizing 5,10-methylenetetrahydrofolate (mTHF) as the methyl donor and reductant in the reaction, yielding dihydrofolate (DHF) as a by-product. This enzymatic reaction provides an intracellular de novo source of dTMP, an essential precursor for DNA biosynthesis. The chain is Thymidylate synthase from Phytoplasma mali (strain AT).